A 533-amino-acid chain; its full sequence is UDP-glucuronosyltransferase 1-2 (533 aa).

An N-terminal signal peptide occupies residues 1 to 27 (MDTGLCVPLRGISGLLLLLCALPWAEG). N-linked (GlcNAc...) asparagine glycans are attached at residues N141, N295, and N433. The chain crosses the membrane as a helical span at residues 491-511 (VIGFLLAIVLTVVFIVFKCCA).

This sequence belongs to the UDP-glycosyltransferase family. As to expression, expressed in kidney.

Its subcellular location is the microsome. The protein resides in the endoplasmic reticulum membrane. It catalyses the reaction glucuronate acceptor + UDP-alpha-D-glucuronate = acceptor beta-D-glucuronoside + UDP + H(+). UDPGT is of major importance in the conjugation and subsequent elimination of potentially toxic xenobiotics and endogenous compounds. The polypeptide is UDP-glucuronosyltransferase 1-2 (Ugt1a2) (Mus musculus (Mouse)).